The sequence spans 1259 residues: Trafficking protein particle complex II-specific subunit 130 homolog (1259 aa).

The residue at position 2 (A2) is an N-acetylalanine. The tract at residues 479–526 is disordered; the sequence is GNIPEMFDGRPSFTEGSGLEASPRTPSSLKVQAPPMSRTNSSPGNFES.

It belongs to the TMEM1 family. Part of the multisubunit TRAPP (transport protein particle) II complex composed of BET3, BET5, TRS20, TRS23, TRS31, TRS33, TRS65, TRS85, TRS120 and TRS130.

It is found in the golgi apparatus. Its subcellular location is the trans-Golgi network. The protein resides in the early endosome. In terms of biological role, specific subunit of the TRAPP II complex, a highly conserved vesicle tethering complex that is required for the proper transport of proteins in post-Golgi trafficking pathways to the growing cell plate in mitotic active cells. Required for the polarized and selective transport of PIN2, but not PIN1, to the plasma membrane. Not required for ER-to-Golgi as well as biosynthetic and endocytic vacuolar transport. The chain is Trafficking protein particle complex II-specific subunit 130 homolog from Arabidopsis thaliana (Mouse-ear cress).